The sequence spans 195 residues: Cholesin (195 aa).

The disordered stretch occupies residues 1–78 (MAKHKRKGLE…KEEKKRLREA (78 aa)). Basic and acidic residues-rich tracts occupy residues 8–18 (GLEGTGKESKR) and 26–39 (ETPR…DKET). A phosphoserine mark is found at Ser-41, Ser-48, and Ser-52. Basic and acidic residues predominate over residues 53–77 (PEERRVLERKLKKERKKEEKKRLRE). Position 96 is a phosphoserine (Ser-96).

Secreted via exosomes, secreted from the instestine, secretion is induced by feeding and cholesterol absorption. Expressed in enterocytes.

The protein resides in the secreted. Its function is as follows. Hormone secreted from the intestine in response to cholesterol, where it acts to inhibit cholesterol synthesis in the liver and VLDL secretion,leading to a reduction in circulating cholesterol levels. Acts through binding to its receptor, GPR146. The protein is Cholesin (Chlsn) of Mus musculus (Mouse).